The following is a 1184-amino-acid chain: DNA polymerase III subunit alpha (1184 aa).

Belongs to the DNA polymerase type-C family. DnaE subfamily. The Pol III holoenzyme complex contains at least 10 different subunits organized into 3 functionally essential subassemblies: the Pol III core, the beta sliding clamp processivity factor and the clamp-loading complex. The Pol III core (subunits alpha, epsilon and theta) contains the polymerase and the 3'-5' exonuclease proofreading activities. The polymerase is tethered to the template via the dimeric beta sliding clamp processivity factor. The clamp loader (also called gamma complex) assembles the beta sliding clamp onto the primed template and plays a central role in the organization and communication at the replication fork. The clamp-loading complex contains delta, delta', psi and chi, and 3 copies of either or both of two different DnaX proteins, gamma and tau. The DNA replisome complex has a single clamp loader (3 tau and 1 each of delta, delta', psi and chi subunits) which binds 3 Pol III cores (1 core on the leading strand and 2 on the lagging strand) each with a beta sliding clamp dimer. Interacts with the beta-sliding clamp (DnaN). Co-immunoprecipitates with DarG in the presence and absence of darT.

The protein localises to the cytoplasm. The catalysed reaction is DNA(n) + a 2'-deoxyribonucleoside 5'-triphosphate = DNA(n+1) + diphosphate. Functionally, DNA polymerase III is a complex, multichain enzyme responsible for most of the replicative synthesis in bacteria. Pol III also exhibits 3' to 5' exonuclease activity. The alpha chain is the DNA polymerase. In Mycobacterium tuberculosis (strain ATCC 25618 / H37Rv), this protein is DNA polymerase III subunit alpha (dnaE1).